A 321-amino-acid chain; its full sequence is Phosphatidylglycerol phospholipase C (321 aa).

The GP-PDE domain maps to 2–251 (VEIVGHRAFK…DDPIKARKLC (250 aa)). Residues 297–315 (WVHIKLCGWSIAYVIFLFL) form a helical; Anchor for type IV membrane protein membrane-spanning segment.

Belongs to the glycerophosphoryl diester phosphodiesterase family.

It localises to the mitochondrion membrane. Its subcellular location is the lipid droplet. It carries out the reaction a 1,2-diacyl-sn-glycero-3-phospho-(1'-sn-glycerol) + H2O = sn-glycerol 3-phosphate + a 1,2-diacyl-sn-glycerol + H(+). Its function is as follows. Phosphatidylglycerol phospholipase required for the removal of excess phosphatidylglycerol (PG) via a phospholipase C-type degradation mechanism. The chain is Phosphatidylglycerol phospholipase C (PGC1) from Saccharomyces cerevisiae (strain ATCC 204508 / S288c) (Baker's yeast).